The primary structure comprises 435 residues: Serine--tRNA ligase (435 aa).

Thr233 to Glu235 lines the L-serine pocket. Position 264-266 (Arg264–Glu266) interacts with ATP. Glu287 is a binding site for L-serine. Glu351 to Ser354 serves as a coordination point for ATP. Ser386 contributes to the L-serine binding site.

This sequence belongs to the class-II aminoacyl-tRNA synthetase family. Type-1 seryl-tRNA synthetase subfamily. In terms of assembly, homodimer. The tRNA molecule binds across the dimer.

The protein localises to the cytoplasm. The enzyme catalyses tRNA(Ser) + L-serine + ATP = L-seryl-tRNA(Ser) + AMP + diphosphate + H(+). It carries out the reaction tRNA(Sec) + L-serine + ATP = L-seryl-tRNA(Sec) + AMP + diphosphate + H(+). It functions in the pathway aminoacyl-tRNA biosynthesis; selenocysteinyl-tRNA(Sec) biosynthesis; L-seryl-tRNA(Sec) from L-serine and tRNA(Sec): step 1/1. Functionally, catalyzes the attachment of serine to tRNA(Ser). Is also able to aminoacylate tRNA(Sec) with serine, to form the misacylated tRNA L-seryl-tRNA(Sec), which will be further converted into selenocysteinyl-tRNA(Sec). In Anaeromyxobacter dehalogenans (strain 2CP-C), this protein is Serine--tRNA ligase.